The chain runs to 688 residues: Glycine--tRNA ligase beta subunit (688 aa).

This sequence belongs to the class-II aminoacyl-tRNA synthetase family. As to quaternary structure, tetramer of two alpha and two beta subunits.

It localises to the cytoplasm. The catalysed reaction is tRNA(Gly) + glycine + ATP = glycyl-tRNA(Gly) + AMP + diphosphate. The sequence is that of Glycine--tRNA ligase beta subunit from Geotalea uraniireducens (strain Rf4) (Geobacter uraniireducens).